We begin with the raw amino-acid sequence, 392 residues long: ESX-1 secretion-associated protein EspA (392 aa).

The tract at residues 302–392 (TRQALRPRAD…GQKVLVRNVV (91 aa)) is disordered. Positions 334–344 (QGMGGPVGMGG) are enriched in gly residues.

In terms of assembly, homodimer; disulfide-linked. An artificial EsxB-EsxA heterodimer interacts with EspA.

It localises to the secreted. Required for secretion of EsxA (ESAT-6) and EsxB (CFP-10) and for virulence. Involved in translocation of bacteria from the host (human) phagolysosome to the host cytoplasm. The sequence is that of ESX-1 secretion-associated protein EspA from Mycobacterium tuberculosis (strain ATCC 25618 / H37Rv).